The primary structure comprises 199 residues: IMP cyclohydrolase (199 aa).

It belongs to the archaeal IMP cyclohydrolase family.

It catalyses the reaction IMP + H2O = 5-formamido-1-(5-phospho-D-ribosyl)imidazole-4-carboxamide. The protein operates within purine metabolism; IMP biosynthesis via de novo pathway; IMP from 5-formamido-1-(5-phospho-D-ribosyl)imidazole-4-carboxamide: step 1/1. Its function is as follows. Catalyzes the cyclization of 5-formylamidoimidazole-4-carboxamide ribonucleotide to IMP. In Methanothrix thermoacetophila (strain DSM 6194 / JCM 14653 / NBRC 101360 / PT) (Methanosaeta thermophila), this protein is IMP cyclohydrolase.